The chain runs to 164 residues: F-box protein At4g05010 (164 aa).

The tract at residues 38–57 (SKRAPENDSPPVKRPSHETT) is disordered. One can recognise an F-box domain in the interval 61–109 (RSLLETLHQDILIRVLCHVDHEDLATLKRVSKTIRKAVIEAKKSHFDYS).

The sequence is that of F-box protein At4g05010 from Arabidopsis thaliana (Mouse-ear cress).